A 188-amino-acid chain; its full sequence is Interferon alpha-2 (188 aa).

An N-terminal signal peptide occupies residues 1–23; the sequence is MALTFALLVALLVLSCKSSCSVG. 2 cysteine pairs are disulfide-bonded: cysteine 24/cysteine 121 and cysteine 52/cysteine 161. The O-linked (GalNAc...) threonine glycan is linked to threonine 129.

Belongs to the alpha/beta interferon family. Interacts with IFNAR2.

The protein localises to the secreted. Functionally, produced by macrophages, IFN-alpha have antiviral activities. The sequence is that of Interferon alpha-2 (IFNA2) from Homo sapiens (Human).